The primary structure comprises 119 residues: Large ribosomal subunit protein uL18 (119 aa).

The protein belongs to the universal ribosomal protein uL18 family. As to quaternary structure, part of the 50S ribosomal subunit; part of the 5S rRNA/L5/L18/L25 subcomplex. Contacts the 5S and 23S rRNAs.

Its function is as follows. This is one of the proteins that bind and probably mediate the attachment of the 5S RNA into the large ribosomal subunit, where it forms part of the central protuberance. In Clostridium botulinum (strain ATCC 19397 / Type A), this protein is Large ribosomal subunit protein uL18.